Consider the following 193-residue polypeptide: 7-methyl-GTP pyrophosphatase (193 aa).

Asp-70 functions as the Proton acceptor in the catalytic mechanism.

It belongs to the Maf family. YceF subfamily. Requires a divalent metal cation as cofactor.

The protein resides in the cytoplasm. It catalyses the reaction N(7)-methyl-GTP + H2O = N(7)-methyl-GMP + diphosphate + H(+). Its function is as follows. Nucleoside triphosphate pyrophosphatase that hydrolyzes 7-methyl-GTP (m(7)GTP). May have a dual role in cell division arrest and in preventing the incorporation of modified nucleotides into cellular nucleic acids. This chain is 7-methyl-GTP pyrophosphatase, found in Aliivibrio fischeri (strain ATCC 700601 / ES114) (Vibrio fischeri).